Consider the following 1873-residue polypeptide: MENEIFTPLLEQFMTSPLVTWVKTFGPLAAGNGTNLDEYVALVDGVFLNQVMLQINPKSESQRVNKKVNNDASLRIHNLSILVKQIKFYYQETLQQLIMMPLPDILIIGKNPFSEQGTEEVKKLLLLLLGCAVQCQKKEEFIEKIQGLDFDTKAAVAAHIQEVTHNQENVFDLQWMEVTDMSQEDIEPLLKNMVSHLRRLIDERDEHSETIVELSEERDGVHFLPHASSSAQSPCGSPGMKRTESRQHLSVELADAKAKIRRLRQELEEKTEQLLDCKQELEQIEVELKRLQQENMNLLSDARSARMYRDELDALREKAVRVDKLESELSRYKERLHDIEFYKARVEELKEDNQVLLETKTMLEDQLEGTRARSDKLHELEKENLQLKAKLHDMEMERDMDRKKIEELMEENMTLEMAQKQSMDESLHLGWELEQISRTSELAEAPQKSLGHEVNELTSSKLLKLEMENQSLTKTVEELRSTADSAAGSTSKILKVEKENQRLNKKVEILENEIIQEKQSLQNCQNLSKDLMKEKAQLEKTIETLRENSERQIKILEQENEHLNQTVSSLRQRSQISAEARVKDIEKENKILHESIKETCGKLSKIEFEKRQMKKELELYKEKGERAEELENELNHLGKENELLQKKITNLKITCEKLETLEQENSELERENRKFKKTLDSFKNLTFQLESLEKENSQLDEENLELRRSVESLKCASMRMAQLQLENKELESEKEQLRKGLELMRASFKKTERLEVSYQGLDTENQRLQKALENSNKKIQQLESELQDLEMENQTLQKSLEELKISSKRLEQLEKENKSLEQETSQLEKDKKQLEKENKRLRQQAEIKDTTLEENNVKIGNLEKENKTLFKEINVYKESCVRLKELEKENKELVKRATIDIKTLVTLREDLVSEKLKTQQMNNDLEKLTHELEKIGLNKERLLHDEQSTDDSRYKLLESKLESTLKKSLEIKEEKIAALEARLEESTNYNQQLRHELKTVKKNYEALKQRQDEERMVQSSIPVSGEDDKWGRESQEATRELLKVKDRLIEVERNNATLQAEKQALKTQLKQLETQNNNLQAQILALQRQTVSLQEQNTTLQTQNAKLQVENSTLNSQSTSLMNQNAQLLIQQSSLENENESIMKEREDLKSLYDALIKDHEKLELLHERQASEYESLISKHGTLKSAHKNLEVEHKDLEDRYNQLLKQKGQLEDLEKMIKTEQEKMLLESKNHEVVASEYKKLCGENDRLNYTYSQLLKETEILQMDHKNLKSVLNNSKLEQTRLEAEFSKLKEQYQQLDITSTKLNNQCELLSQLKGNLEEENRHLLDQIQTLMLQNRTLLEQNMESKDLFHVEQRQYIDKLNELRRQKEKLEEKIMDQYKFYDPSPPRRRGNWITLKMRKLIKSKKDINRERQKSLTLTPTRSDSSEGFLQLPHQDSQDSSSVGSNSLEDGQTLGTKKSSMVALKRLPFLRNRPKDKDKMKACYRRSMSMNDLVQSMVLAGGQWTGSTENLEVPDDISTGKRRKELGAMAFSTTAINFSTVNSSAAFRSKQLVNNKDTTSFEDISPQGISDDSSTGSRVHASRPASLDSGRTSTSNSNNNASLHEVKAGAVNIQSRPQSHSSGDFSLLHDHETWSSSGSSPIQYLKRQTRSSPMLQHKISETIESRAHHKMKAGSPGSEVVTLQQFLEESNKLTSIQLKSSSQENLLDEVMKSLSVSSDFLGKDKPVSCTLARSVSGKTPGDFYDRRTTKPEFLRTGPQKTEDAYTISSAGKPTPSTQGKIKLVKETSVSRQSKDSNPYATLPRASSVISTAEGTTRRTSIHDFLSKDSRLPVSVDSSPPTAGSSSTTASNVNKVQESRNSKSRSREQQSS.

Residues 12 to 132 (QFMTSPLVTW…KLLLLLLGCA (121 aa)) enclose the Calponin-homology (CH) domain. The stretch at 196-425 (HLRRLIDERD…EMAQKQSMDE (230 aa)) forms a coiled coil. Phosphoserine occurs at positions 233, 237, and 449. Coiled-coil stretches lie at residues 458 to 1232 (TSSK…ESKN) and 1268 to 1385 (HKNL…KFYD). Disordered stretches follow at residues 816-841 (ENKS…NKRL) and 1013-1034 (EERM…GRES). S1020 is modified (phosphoserine). Residue S1387 is modified to Phosphoserine. Residues 1390 to 1408 (RRRGNWITLKMRKLIKSKK) are phosphoinositide-binding. Over residues 1407 to 1416 (KKDINRERQK) the composition is skewed to basic and acidic residues. Disordered regions lie at residues 1407–1459 (KKDI…LGTK), 1560–1602 (TTSF…SNNN), and 1616–1643 (QSRP…GSSP). S1417 bears the Phosphoserine; by PKB/AKT1 mark. 4 stretches are compositionally biased toward polar residues: residues 1417 to 1430 (SLTL…SSEG), 1445 to 1459 (VGSN…LGTK), 1560 to 1579 (TTSF…STGS), and 1616 to 1626 (QSRPQSHSSGD). Residue T1421 is modified to Phosphothreonine. Positions 1674–1704 (KAGSPGSEVVTLQQFLEESNKLTSIQLKSSS) match the GBA motif. Phosphoserine occurs at positions 1677, 1692, and 1719. Residues 1715-1825 (SLSVSSDFLG…GTTRRTSIHD (111 aa)) are SH2-like; required for interaction with growth factor receptors. The disordered stretch occupies residues 1738-1873 (SGKTPGDFYD…KSRSREQQSS (136 aa)). Residues 1745-1755 (FYDRRTTKPEF) are compositionally biased toward basic and acidic residues. The residue at position 1767 (Y1767) is a Phosphotyrosine. 3 stretches are compositionally biased toward polar residues: residues 1768–1781 (TISS…STQG), 1789–1801 (TSVS…SNPY), and 1809–1820 (SVISTAEGTTRR). At Y1801 the chain carries Phosphotyrosine. S1822 and S1839 each carry phosphoserine. Basic and acidic residues predominate over residues 1822–1832 (SIHDFLSKDSR). Over residues 1839–1852 (SSPPTAGSSSTTAS) the composition is skewed to low complexity. The span at 1858-1873 (QESRNSKSRSREQQSS) shows a compositional bias: basic and acidic residues.

The protein belongs to the CCDC88 family. As to quaternary structure, homodimer. Interacts (via GBA motif) with guanine nucleotide-binding protein G(i) alpha subunits GNAI1, GNAI2 and GNAI3. Also interacts (via GNA motif) with guanine nucleotide-binding protein G(s) alpha subunit GNAS. Interaction with G(i) alpha subunits occurs before interaction with GNAS and is regulated by phosphorylation; phosphorylation at Ser-1677 enhances binding to G(i) alpha subunits while phosphorylation at Ser-1692 abolishes G(i) alpha subunit binding, promoting binding to GNAS. Interacts (via C-terminal SH2-like region) with growth factor receptors EGFR, INSR and KDR/VEGFR2 (via their autophosphorylated cytoplasmic tails). Forms a complex with EGFR and GNAI3 which leads to enhanced EGFR signaling and triggering of cell migration; ligand stimulation is required for recruitment of GNAI3 to the complex. Interacts (tyrosine-phosphorylated form) with phosphatidylinositol 3-kinase (PI3K) regulatory subunit PIK3R1/p85a (via SH2 domains); the interaction enables recruitment of PIK3R1 to the EGFR receptor, enhancing PI3K activity and cell migration. Interacts with serine/threonine-protein kinase PRKCQ; the interaction leads to phosphorylation of CCDC88A and inhibition of its guanine nucleotide exchange factor activity. Interacts (via C-terminus) with DISC1; the interaction is direct. Interacts with AKT proteins; the interaction is inhibited in the presence of DISC1. Interacts with AKT1/PKB (via C-terminus). The non-phosphorylated form interacts with phosphatidylinositol 4-phosphate [Pi(4)P] and weakly with phosphatidylinositol 3-phosphate [Pi(3)P]. Interacts with microtubules. Interacts with actin. Phosphorylation is induced by epidermal growth factor (EGF) in a phosphoinositide 3-kinase (PI3K)-dependent manner. Phosphorylation by AKT1/PKB is necessary for the delocalization from the cell membrane and for cell migration. Phosphorylated on tyrosine residues which promotes binding to phosphatidylinositol 3-kinase (PI3K) regulatory subunit PIK3R1/p85a and enhances PI3K activity. Tyrosine-phosphorylated by both receptor and non-receptor tyrosine kinases in vitro. Tyrosine phosphorylation is required for AKT1-dependent phosphorylation of Ser-1417. Phosphorylation at Ser-1692 by PRKCQ disrupts interaction with GNAI3 and inhibits guanine nucleotide exchange factor activity. In terms of tissue distribution, expressed in the dentate gyrus, pyramidal cell layer of hippocampal regions CA1 and CA3 at postnatal 15. Expressed highly in neurons. Weakly in neuron progenitors (at protein level). Expressed in the dentate granule cell layer of the hippocampus. Expressed highly in the adult testis, moderately in the brain and at a low level in the spleen, lungs and fat.

It localises to the cell membrane. Its subcellular location is the cytoplasm. The protein localises to the cytosol. It is found in the cytoplasmic vesicle. The protein resides in the cell projection. It localises to the lamellipodium. Its subcellular location is the cytoskeleton. The protein localises to the cilium basal body. It is found in the microtubule organizing center. The protein resides in the centrosome. It localises to the centriole. Functionally, bifunctional modulator of guanine nucleotide-binding proteins (G proteins). Acts as a non-receptor guanine nucleotide exchange factor which binds to and activates guanine nucleotide-binding protein G(i) alpha subunits. Also acts as a guanine nucleotide dissociation inhibitor for guanine nucleotide-binding protein G(s) subunit alpha GNAS. Essential for cell migration. Interacts in complex with G(i) alpha subunits with the EGFR receptor, retaining EGFR at the cell membrane following ligand stimulation and promoting EGFR signaling which triggers cell migration. Binding to Gi-alpha subunits displaces the beta and gamma subunits from the heterotrimeric G-protein complex which enhances phosphoinositide 3-kinase (PI3K)-dependent phosphorylation and kinase activity of AKT1/PKB. Phosphorylation of AKT1/PKB induces the phosphorylation of downstream effectors GSK3 and FOXO1/FKHR, and regulates DNA replication and cell proliferation. Binds in its tyrosine-phosphorylated form to the phosphatidylinositol 3-kinase (PI3K) regulatory subunit PIK3R1 which enables recruitment of PIK3R1 to the EGFR receptor, enhancing PI3K activity and cell migration. Plays a role as a key modulator of the AKT-mTOR signaling pathway, controlling the tempo of the process of newborn neuron integration during adult neurogenesis, including correct neuron positioning, dendritic development and synapse formation. Inhibition of G(s) subunit alpha GNAS leads to reduced cellular levels of cAMP and suppression of cell proliferation. Essential for the integrity of the actin cytoskeleton. Required for formation of actin stress fibers and lamellipodia. May be involved in membrane sorting in the early endosome. Plays a role in ciliogenesis and cilium morphology and positioning and this may partly be through regulation of the localization of scaffolding protein CROCC/Rootletin. In Mus musculus (Mouse), this protein is Girdin (Ccdc88a).